A 394-amino-acid chain; its full sequence is RILP-like protein 1 (394 aa).

Residues 2-89 form the RH1 domain; the sequence is EGISALEKNV…RLERMDRIEK (88 aa). Residues 68 to 312 adopt a coiled-coil conformation; it reads EMEELRLELD…KVFMLQEELA (245 aa). In terms of domain architecture, RH2 spans 282–347; that stretch reads RPRFTLQELR…IPQESGIKRL (66 aa). Positions 318–337 are disordered; sequence EADEEHKLPQSSPVIDSKAP.

This sequence belongs to the RILPL family.

The protein localises to the cytoplasm. Its subcellular location is the cytosol. The protein resides in the cytoskeleton. It localises to the microtubule organizing center. It is found in the centrosome. The protein localises to the cell projection. Its subcellular location is the cilium. Functionally, plays a role in the regulation of cell shape and polarity. Plays a role in cellular protein transport, including protein transport away from primary cilia. Neuroprotective protein. The chain is RILP-like protein 1 (rilpl1) from Xenopus tropicalis (Western clawed frog).